The chain runs to 99 residues: DNA-directed RNA polymerase subunit omega (99 aa).

The protein belongs to the RNA polymerase subunit omega family. As to quaternary structure, the RNAP catalytic core consists of 2 alpha, 1 beta, 1 beta' and 1 omega subunit. When a sigma factor is associated with the core the holoenzyme is formed, which can initiate transcription.

It catalyses the reaction RNA(n) + a ribonucleoside 5'-triphosphate = RNA(n+1) + diphosphate. In terms of biological role, promotes RNA polymerase assembly. Latches the N- and C-terminal regions of the beta' subunit thereby facilitating its interaction with the beta and alpha subunits. This Xanthomonas oryzae pv. oryzae (strain MAFF 311018) protein is DNA-directed RNA polymerase subunit omega.